Consider the following 389-residue polypeptide: Smad nuclear interacting protein 1 (389 aa).

Positions 1-10 (MKAGKSERER) are enriched in basic and acidic residues. The tract at residues 1-212 (MKAGKSERER…GNKNKEVPVK (212 aa)) is disordered. Phosphoserine is present on serine 18. Lysine 28 is covalently cross-linked (Glycyl lysine isopeptide (Lys-Gly) (interchain with G-Cter in SUMO); alternate). Lysine 28 is covalently cross-linked (Glycyl lysine isopeptide (Lys-Gly) (interchain with G-Cter in SUMO1); alternate). Residue lysine 28 forms a Glycyl lysine isopeptide (Lys-Gly) (interchain with G-Cter in SUMO2); alternate linkage. Residues 28–43 (KQERLSPEPVAHRRPD) are compositionally biased toward basic and acidic residues. Phosphoserine occurs at positions 33 and 48. The span at 54-72 (AESGSAGHRGSRARGASRS) shows a compositional bias: low complexity. Over residues 73-95 (PAKKKSKSSGRRSKSPRTKRSRS) the composition is skewed to basic residues. A Phosphoserine modification is found at serine 95. 2 stretches are compositionally biased toward basic and acidic residues: residues 103–138 (VKQE…ERDR) and 147–163 (RSSD…DRDS). A Glycyl lysine isopeptide (Lys-Gly) (interchain with G-Cter in SUMO2) cross-link involves residue lysine 104. Serine 149 is subject to Phosphoserine. Positions 166–197 (LQAQEEERDFNNARRREHRQQNESAGAEAQEV) form a coiled coil. A Glycyl lysine isopeptide (Lys-Gly) (interchain with G-Cter in SUMO2) cross-link involves residue lysine 214. Residues 272–335 (YLLGRHRRIA…NGTFLNNKRI (64 aa)) enclose the FHA domain. A compositionally biased stretch (basic and acidic residues) spans 363–373 (ESSDTSELDRK). The segment at 363–389 (ESSDTSELDRKEDEDEEEEEEMVSDSS) is disordered. Residues 374–389 (EDEDEEEEEEMVSDSS) are compositionally biased toward acidic residues. A Phosphoserine modification is found at serine 386.

Component of activated spliceosome complexes. Component of the minor spliceosome, which splices U12-type introns. Binds SMAD4 and CREBBP/EP300. Binds the SMAD1/OAZ1/PSMB4 complex. Interacts with DROSHA and SMARCA4. Component of the SNARP complex which consists at least of SNIP1, SNW1, THRAP3, BCLAF1 and PNN. In terms of processing, degraded by the proteasome upon binding to the SMAD1/OAZ1/PSMB4 complex.

It localises to the nucleus. Functionally, required for pre-mRNA splicing as component of the spliceosome. As a component of the minor spliceosome, involved in the splicing of U12-type introns in pre-mRNAs. Down-regulates NF-kappa-B signaling by competing with RELA for CREBBP/EP300 binding. Involved in the microRNA (miRNA) biogenesis. May be involved in cyclin-D1/CCND1 mRNA stability through the SNARP complex which associates with both the 3'end of the CCND1 gene and its mRNA. This chain is Smad nuclear interacting protein 1 (Snip1), found in Rattus norvegicus (Rat).